The primary structure comprises 90 residues: Cell division topological specificity factor (90 aa).

The protein belongs to the MinE family.

Functionally, prevents the cell division inhibition by proteins MinC and MinD at internal division sites while permitting inhibition at polar sites. This ensures cell division at the proper site by restricting the formation of a division septum at the midpoint of the long axis of the cell. The protein is Cell division topological specificity factor of Clostridium perfringens (strain SM101 / Type A).